The primary structure comprises 687 residues: Hemin receptor (687 aa).

Positions 1 to 28 are cleaved as a signal peptide; that stretch reads MPRSTSDRFRWSPLSLAIACTLSLAVQA. Residues 44-51 carry the TonB box motif; the sequence is DTMVVTAT. The TBDR plug domain maps to 56–167; it reads SSFEAPMMVT…LGGVISYETV (112 aa). Positions 178–687 constitute a TBDR beta-barrel domain; that stretch reads NSGYRVYSAA…NAKFFVSYQW (510 aa). The interval 319–338 is disordered; that stretch reads ARPQGTPEEGRKQTTKGGKL. The span at 326–338 shows a compositional bias: basic and acidic residues; it reads EEGRKQTTKGGKL. Positions 670–687 match the TonB C-terminal box motif; sequence QGVPQDGRNAKFFVSYQW.

This sequence belongs to the TonB-dependent receptor family.

Its subcellular location is the cell outer membrane. Its function is as follows. This protein is involved in the initial step of iron uptake by binding hemin, an iron chelatin siderophore that allows the bacteria to extract iron from the environment. In Yersinia enterocolitica, this protein is Hemin receptor (hemR).